The primary structure comprises 187 residues: UPF0301 protein BCI_0481 (187 aa).

The protein belongs to the UPF0301 (AlgH) family.

The chain is UPF0301 protein BCI_0481 from Baumannia cicadellinicola subsp. Homalodisca coagulata.